The primary structure comprises 98 residues: Homeobox protein Ht-En (98 aa).

Residues 3–62 constitute a DNA-binding region (homeobox); that stretch reads EKRPRTAFTGDQLARLKREFSENKYLTEQRRTCLAKELNLNESQIKIWFQNKRAKMKKAS. Residues 79-98 are disordered; it reads NHSSSSSSSSSSSSSIFLLA. The segment covering 81–98 has biased composition (low complexity); the sequence is SSSSSSSSSSSSSIFLLA.

It belongs to the engrailed homeobox family. Phosphorylated in the Ser-rich domain.

Its subcellular location is the nucleus. In terms of biological role, this protein specifies the body segmentation pattern. The sequence is that of Homeobox protein Ht-En (HT-EN) from Helobdella triserialis (Leech).